The primary structure comprises 246 residues: Trypsin V-A (246 aa).

Residues 1–15 (MKICIFFTLLGTVAA) form the signal peptide. Residues 16 to 24 (FPTEDNDDR) constitute a propeptide, activation peptide. One can recognise a Peptidase S1 domain in the interval 25–244 (IVGGYTCQEH…YLNWIHQTIA (220 aa)). 6 disulfide bridges follow: Cys-31-Cys-160, Cys-49-Cys-65, Cys-133-Cys-233, Cys-140-Cys-206, Cys-171-Cys-185, and Cys-196-Cys-220. His-64 functions as the Charge relay system in the catalytic mechanism. Residues Glu-76, Asn-78, and Glu-86 each contribute to the Ca(2+) site. Asp-108 functions as the Charge relay system in the catalytic mechanism. Residue Ser-200 is the Charge relay system of the active site.

This sequence belongs to the peptidase S1 family. Ca(2+) serves as cofactor.

Its subcellular location is the secreted. The protein resides in the extracellular space. The enzyme catalyses Preferential cleavage: Arg-|-Xaa, Lys-|-Xaa.. The chain is Trypsin V-A from Rattus norvegicus (Rat).